The chain runs to 169 residues: Peptide methionine sulfoxide reductase MsrA (169 aa).

Residue Cys10 is part of the active site.

This sequence belongs to the MsrA Met sulfoxide reductase family.

The enzyme catalyses L-methionyl-[protein] + [thioredoxin]-disulfide + H2O = L-methionyl-(S)-S-oxide-[protein] + [thioredoxin]-dithiol. The catalysed reaction is [thioredoxin]-disulfide + L-methionine + H2O = L-methionine (S)-S-oxide + [thioredoxin]-dithiol. Functionally, has an important function as a repair enzyme for proteins that have been inactivated by oxidation. Catalyzes the reversible oxidation-reduction of methionine sulfoxide in proteins to methionine. The protein is Peptide methionine sulfoxide reductase MsrA of Streptococcus pyogenes serotype M12 (strain MGAS2096).